Consider the following 504-residue polypeptide: ATP synthase subunit alpha, chloroplastic (504 aa).

Residue 170–177 (GDRQTGKT) participates in ATP binding.

It belongs to the ATPase alpha/beta chains family. In terms of assembly, F-type ATPases have 2 components, CF(1) - the catalytic core - and CF(0) - the membrane proton channel. CF(1) has five subunits: alpha(3), beta(3), gamma(1), delta(1), epsilon(1). CF(0) has four main subunits: a, b, b' and c.

The protein resides in the plastid. The protein localises to the chloroplast thylakoid membrane. It catalyses the reaction ATP + H2O + 4 H(+)(in) = ADP + phosphate + 5 H(+)(out). Produces ATP from ADP in the presence of a proton gradient across the membrane. The alpha chain is a regulatory subunit. The protein is ATP synthase subunit alpha, chloroplastic of Jasminum nudiflorum (Winter jasmine).